A 142-amino-acid chain; its full sequence is Chorion protein S16 (142 aa).

An N-terminal signal peptide occupies residues Met-1–Ala-21.

It belongs to the chorion protein S16 family.

It localises to the secreted. Its function is as follows. Chorion membrane (egg shell) protein; plays a role in protecting the egg from the environment. This is Chorion protein S16 (Cp16) from Drosophila grimshawi (Hawaiian fruit fly).